Here is a 343-residue protein sequence, read N- to C-terminus: ATP-dependent 6-phosphofructokinase (343 aa).

Residues glycine 10, arginine 73–valine 74, and glycine 103–threonine 106 each bind ATP. Glutamate 104 lines the Mg(2+) pocket. Residues threonine 126–aspartate 128, arginine 163, methionine 170–arginine 172, glutamate 223, arginine 267, and histidine 273–arginine 276 each bind substrate. Aspartate 128 functions as the Proton acceptor in the catalytic mechanism.

This sequence belongs to the phosphofructokinase type A (PFKA) family. Mixed-substrate PFK group III subfamily. In terms of assembly, homodimer or homotetramer. It depends on Mg(2+) as a cofactor.

The protein localises to the cytoplasm. The enzyme catalyses beta-D-fructose 6-phosphate + ATP = beta-D-fructose 1,6-bisphosphate + ADP + H(+). The catalysed reaction is D-tagatofuranose 6-phosphate + ATP = D-tagatofuranose 1,6-bisphosphate + ADP + H(+). The protein operates within carbohydrate degradation; glycolysis; D-glyceraldehyde 3-phosphate and glycerone phosphate from D-glucose: step 3/4. Functionally, catalyzes the phosphorylation of D-fructose 6-phosphate to fructose 1,6-bisphosphate by ATP, the first committing step of glycolysis. Can also catalyze the phosphorylation of tagatose-6-phosphate. This is ATP-dependent 6-phosphofructokinase from Mycobacterium tuberculosis (strain CDC 1551 / Oshkosh).